Consider the following 354-residue polypeptide: Uroporphyrinogen decarboxylase (354 aa).

Residues 27-31 (RQAGR), D77, Y154, T209, and H327 each bind substrate.

It belongs to the uroporphyrinogen decarboxylase family. As to quaternary structure, homodimer.

The protein localises to the cytoplasm. The enzyme catalyses uroporphyrinogen III + 4 H(+) = coproporphyrinogen III + 4 CO2. It participates in porphyrin-containing compound metabolism; protoporphyrin-IX biosynthesis; coproporphyrinogen-III from 5-aminolevulinate: step 4/4. Functionally, catalyzes the decarboxylation of four acetate groups of uroporphyrinogen-III to yield coproporphyrinogen-III. The chain is Uroporphyrinogen decarboxylase from Pseudomonas entomophila (strain L48).